We begin with the raw amino-acid sequence, 873 residues long: MIKKFDKKDEESGSGSNPFQNLEKSAVLQEARIFNETPINPRRCLHILTKIIYLLNQGEHFGTTEATEAFFAMTRLFQSNDQTLRRMCYLTIKEMANISEDVIIVTSSLTKDMTGKEDVYRGPAIRALCRITDTTMLQAIERYMKQAIVDKVPSVSSSALVSSLHMVKMSYDVVKRWVNEAQEAASSDNIMVQYHALGLLYHLRKNDRLAVTKMLNKFTKSGLKSPFAYCMLIRIASKLLDETEAGHDSPLFDFIESCLRNKNEMVVYEAASAIVHMPNCTARELAPAVSVLQLFCSSPKAALRYAAVRTLNKVAMKHPSAVTACNLDLENLITDSNRSIATLAITTLLKTGSESSVDRLMKQISSFVSEISDEFKVVVVQAISALCQKYPRKHSAMMNFLSNMLRDDGGFEYKRAIVDCIISIIEENPESKETGLAHLCEFIEDCEHTVLATKILHLLGKEGPRTPQPSKYIRFIFNRVVLESEAVRAAAVSALAKFGAQNDDLLPSVLVLMQRCMMDSDDEVRDRATFYMNVLQQKQKALNAAYIFNGLSVSIPGLEKSLHQYTLEPSEKPFDMKSVPLATTPITEQKTEIAPAATSKLPEKLAPSRQDIYQEQLAAIPEFQGLGPLFKSSDPVQLTEAETEYVVRCIKHTFARHMVFQFDCTNTLNDQLLQKVLVQMEPSEAYEVIHYIPAPSLPYSQPGSCYSLVRLPDDDPTAVSCTFSCTMKYLVRDCDPNTGEPDDDGYDDEYVLEDLEVTVPDHIQKVLKPNFGAAWEEVGDEFEKEETFALASVRTLDEAVGNIISFLGMQPCERSDKVPENKNSHVLFLAGVFRGGHDVLVRARLALADGVTMQVTVRSSEETVVDVILASVG.

The span at 1–11 shows a compositional bias: basic and acidic residues; it reads MIKKFDKKDEE. The disordered stretch occupies residues 1–21; that stretch reads MIKKFDKKDEESGSGSNPFQN. 6 HEAT repeats span residues 64-101, 283-320, 321-355, 356-392, 394-430, and 467-504; these read TEAT…ISED, RELA…KHPS, AVTA…GSES, SVDR…KYPR, HSAM…ENPE, and PQPS…QNDD.

The protein belongs to the COPG family. Oligomeric complex.

Its subcellular location is the cytoplasm. It localises to the golgi apparatus membrane. The protein localises to the cytoplasmic vesicle. It is found in the COPI-coated vesicle membrane. The coatomer is a cytosolic protein complex that binds to dilysine motifs and reversibly associates with Golgi non-clathrin-coated vesicles, which further mediate biosynthetic protein transport from the ER, via the Golgi up to the trans Golgi network. Coatomer complex is required for budding from Golgi membranes, and is essential for the retrograde Golgi-to-ER transport of dilysine-tagged proteins. This chain is Coatomer subunit gamma-2 (copg2), found in Takifugu rubripes (Japanese pufferfish).